The sequence spans 421 residues: Flap endonuclease 1 (421 aa).

The tract at residues 1–109 is N-domain; sequence MGIKGLAKLL…HELIKRREKR (109 aa). Residue D34 coordinates Mg(2+). The DNA site is built by R47 and R75. Positions 91, 163, 165, 184, and 186 each coordinate Mg(2+). Positions 127–258 are I-domain; the sequence is EQDKQSKRLV…KTALKLIREH (132 aa). E163 lines the DNA pocket. G236 and D238 together coordinate DNA. Residue D238 coordinates Mg(2+). A disordered region spans residues 284–307; sequence KKLDAQSDDDDEEGVESPSKEENN. A compositionally biased stretch (acidic residues) spans 289–298; the sequence is QSDDDDEEGV. An interaction with PCNA region spans residues 379-387; the sequence is PQTRMDSFF. Residues 398 to 421 are disordered; that stretch reads SAAKRKADAAKAKAAVSKKKTKKH.

This sequence belongs to the XPG/RAD2 endonuclease family. FEN1 subfamily. As to quaternary structure, interacts with PCNA. Three molecules of FEN1 bind to one PCNA trimer with each molecule binding to one PCNA monomer. PCNA stimulates the nuclease activity without altering cleavage specificity. Mg(2+) serves as cofactor. In terms of processing, phosphorylated. Phosphorylation upon DNA damage induces relocalization to the nuclear plasma.

The protein resides in the nucleus. The protein localises to the nucleolus. It is found in the nucleoplasm. Its subcellular location is the mitochondrion. Functionally, structure-specific nuclease with 5'-flap endonuclease and 5'-3' exonuclease activities involved in DNA replication and repair. During DNA replication, cleaves the 5'-overhanging flap structure that is generated by displacement synthesis when DNA polymerase encounters the 5'-end of a downstream Okazaki fragment. It enters the flap from the 5'-end and then tracks to cleave the flap base, leaving a nick for ligation. Also involved in the long patch base excision repair (LP-BER) pathway, by cleaving within the apurinic/apyrimidinic (AP) site-terminated flap. Acts as a genome stabilization factor that prevents flaps from equilibrating into structures that lead to duplications and deletions. Also possesses 5'-3' exonuclease activity on nicked or gapped double-stranded DNA, and exhibits RNase H activity. Also involved in replication and repair of rDNA and in repairing mitochondrial DNA. This Phaeodactylum tricornutum (strain CCAP 1055/1) protein is Flap endonuclease 1.